The primary structure comprises 134 residues: Putative pre-16S rRNA nuclease (134 aa).

It belongs to the YqgF nuclease family.

The protein localises to the cytoplasm. Could be a nuclease involved in processing of the 5'-end of pre-16S rRNA. The polypeptide is Putative pre-16S rRNA nuclease (Helicobacter pylori (strain HPAG1)).